Reading from the N-terminus, the 282-residue chain is MENFWSIVVFFLLSILFILYNISTVCHYYMRISFYYFTILLHGMEVCVTMIPSWLNGKGADYVFHSFFYWCKWTGVHTTVYGYEKTQVEGPAVVICNHQSSLDILSMASIWPKNCVVMMKRILAYVPFFNLGAYFSNTIFIDRYNRERAMASVDYCASEMKNRNLKLWVFPEGTRNREGGFIPFKKGAFNIAVRAQIPIIPVVFSDYRDFYSKPGRYFKNDGEVVIRVLDAIPTKGLTLDDVSELSDMCRDVMLAAYKEVTLEAQQRNATRRGETKDGKKSE.

2 consecutive transmembrane segments (helical) span residues 4 to 24 (FWSIVVFFLLSILFILYNIST) and 32 to 52 (ISFYYFTILLHGMEVCVTMIP). The HXXXXD motif signature appears at 98-103 (HQSSLD). Residues 122-142 (ILAYVPFFNLGAYFSNTIFID) traverse the membrane as a helical segment.

It belongs to the 1-acyl-sn-glycerol-3-phosphate acyltransferase family.

The protein localises to the membrane. It catalyses the reaction a 1-acyl-sn-glycero-3-phosphate + an acyl-CoA = a 1,2-diacyl-sn-glycero-3-phosphate + CoA. It functions in the pathway phospholipid metabolism; CDP-diacylglycerol biosynthesis; CDP-diacylglycerol from sn-glycerol 3-phosphate: step 2/3. In terms of biological role, converts lysophosphatidic acid (LPA) into phosphatidic acid by incorporating an acyl moiety at the sn-2 position of the glycerol backbone. In Caenorhabditis elegans, this protein is Putative 1-acyl-sn-glycerol-3-phosphate acyltransferase acl-2 (acl-2).